A 106-amino-acid polypeptide reads, in one-letter code: UPF0145 protein APJL_0492 (106 aa).

Belongs to the UPF0145 family.

In Actinobacillus pleuropneumoniae serotype 3 (strain JL03), this protein is UPF0145 protein APJL_0492.